Consider the following 832-residue polypeptide: MSPAAALTNGSVRQPDLHLVTDDDFVYEQDIQRSPGSTKPWLAYISYKIQHGTVEEQAFVLERACMQLPRSYKLWKMYLTFRTKHIAKLNAAIFAAEYRKVNSLFERALILLNKMPRIWEMYLKFLMKQPLVTLTRRTFDRALRALPITQHNRIWALYRPFANSAAGPTAVKIWRRYMQVHPEDAEDFIELLYQVGYYTEAAKKYIDVLNNPRFTSKHGKGHFELWSEMVELLVEHATEVEAGYETGIDVERIIRSGIERFADQRGKLWVGLATYWIRRGSFERARDVFEEGITTVMTVRDFTLVFDSYAEFEESVIGAMMEVAGQRAEKGVVDEAADFDLDIRMMRFEHLMDRRPFLLNDVLLRQNPNNVNEWEKRVALWGDNHNEVVNTYTNAIAAVQPKKASGPFHQLWANYAKFYERGGDLRSARIIMEKAVKVPFKSVVELADMWIEWAEMELRNDNFEEAVRIMAKAVQAPKRSTVDYFDETLTPQQRVHKSWKLWSFYVDLVESVGTLEDTKKVYERIFELRIATPQTVVNYANLLEEHKYYEESFKIYERGLDLFSYPVAFELWNMYLTKAVDRKISIERLRDLFEQAVEGCPPKFAKIIYLMYGNLEEERGLARHAMRIYERATRAVSDEDRADMFNFYITKSASNFGLPSTRQIYERAIAALPDDEARDMCLKFADMEKRLGEIDRARAIYGHASQFCDPRTTPAFWTKWEQFEVQHGNEDTFKEMLRIKRAVQAKYNTDVNFIASQALARSQQQKQANGHGSGAEDGDDGVVDAMEALERQARAPAGFVAATEGNIKGDAATTNTTVAANPDAIDIDDMED.

HAT repeat units lie at residues 18–50, 52–84, 96–128, 130–164, 196–235, 245–278, 280–315, 383–421, 423–459, 476–508, 513–545, 547–581, 584–618, 656–690, and 692–726; these read HLVTDDDFVYEQDIQRSPGSTKPWLAYISYKIQ, GTVEEQAFVLERACMQLPRSYKLWKMYLTFRTK, AEYRKVNSLFERALILLNKMPRIWEMYLKFLMK, PLVTLTRRTFDRALRALPITQHNRIWALYRPFANS, GYYTEAAKKYIDVLNNPRFTSKHGKGHFELWSEMVELLVE, ETGIDVERIIRSGIERFADQRGKLWVGLATYWIR, GSFERARDVFEEGITTVMTVRDFTLVFDSYAEFEES, DNHNEVVNTYTNAIAAVQPKKASGPFHQLWANYAKFYER, GDLRSARIIMEKAVKVPFKSVVELADMWIEWAEMELR, APKRSTVDYFDETLTPQQRVHKSWKLWSFYVDL, GTLEDTKKVYERIFELRIATPQTVVNYANLLEE, KYYEESFKIYERGLDLFSYPVAFELWNMYLTKAVD, ISIERLRDLFEQAVEGCPPKFAKIIYLMYGNLEEE, FGLPSTRQIYERAIAALPDDEARDMCLKFADMEKR, and GEIDRARAIYGHASQFCDPRTTPAFWTKWEQFEVQ.

This sequence belongs to the crooked-neck family. In terms of assembly, associated with the spliceosome.

The protein localises to the nucleus. In terms of biological role, involved in pre-mRNA splicing and cell cycle progression. The chain is Pre-mRNA-splicing factor SYF1 (SYF1) from Pyricularia oryzae (strain 70-15 / ATCC MYA-4617 / FGSC 8958) (Rice blast fungus).